The primary structure comprises 452 residues: Zinc finger protein 672 (452 aa).

4 consecutive C2H2-type zinc fingers follow at residues 14–36, 42–64, 70–92, and 99–122; these read YSCSECGKSFCYSSVLLRHERAH, FRCLECGERCARAADLRAHRRTH, YICSECGQSFRHSGRLDLHLGAH, and CPCRTCGRRFPHLPALLLHRRRQH. The C2H2-type 5; degenerate zinc finger occupies 128–150; the sequence is RRCPLCARTFRQSALLFHQARAH. 9 consecutive C2H2-type zinc fingers follow at residues 163–185, 199–221, 227–249, 255–277, 283–305, 311–333, 339–361, 367–389, and 395–417; these read HRCAQCPRAFRSGAGLRSHARIH, HQCGVCGKCFGKSSTLTRHLQTH, FKCPECGKGFLESATLVRHQRTH, YACGDCGRCFSESSTLLRHRRSH, HACATCGKGFGQRSDLVVHQRIH, FACPECGRRFSDRSDLTKHRRTH, YRCELCGKRFTCVSNLNVHRRNH, HKCPECSKAFSVASKLALHRKTH, and AECAECGKCFSHSRSLSQHQRAH.

It belongs to the krueppel C2H2-type zinc-finger protein family.

The protein localises to the nucleus. Functionally, may be involved in transcriptional regulation. The chain is Zinc finger protein 672 from Homo sapiens (Human).